We begin with the raw amino-acid sequence, 442 residues long: Trigger factor (442 aa).

Residues 163-248 enclose the PPIase FKBP-type domain; it reads NDLVTINYCI…ILNVEEKQEN (86 aa).

Belongs to the FKBP-type PPIase family. Tig subfamily.

The protein localises to the cytoplasm. The enzyme catalyses [protein]-peptidylproline (omega=180) = [protein]-peptidylproline (omega=0). Involved in protein export. Acts as a chaperone by maintaining the newly synthesized protein in an open conformation. Functions as a peptidyl-prolyl cis-trans isomerase. In Buchnera aphidicola subsp. Schizaphis graminum (strain Sg), this protein is Trigger factor.